Here is a 1506-residue protein sequence, read N- to C-terminus: Phosphatidylinositol 3-kinase C2 domain-containing subunit gamma (1506 aa).

Residues 1 to 34 form a disordered region; sequence MAYSWQTEPNRTEPQEDGSDTQQFHHTNQHLSSR. The segment covering 20–34 has biased composition (polar residues); the sequence is DTQQFHHTNQHLSSR. In terms of domain architecture, PI3K-RBD spans 285–371; that stretch reads DTKFRVKISI…IQLHLQKNRD (87 aa). Residues 541–689 form the C2 PI3K-type domain; it reads LQSHLSFTVC…SPLTLQIDFP (149 aa). One can recognise a PIK helical domain in the interval 704–880; sequence RTDHEEPPRE…QELLAALQFC (177 aa). A PI3K/PI4K catalytic domain is found at 949–1227; sequence DRDACSYFTS…KIKESLECFP (279 aa). The segment at 955–961 is G-loop; that stretch reads YFTSNAS. The tract at residues 1091 to 1099 is catalytic loop; it reads GVCDRHNDN. Positions 1110–1136 are activation loop; that stretch reads HIDFGKFLGHAQTFGGIKRDRAPFIFT. Residues 1260–1372 enclose the PX domain; that stretch reads LNKTRTIQRV…SFFLSEHIQP (113 aa). Residues 1381-1506 enclose the C2 domain; sequence DPGENSLDKS…KWYPLGNSII (126 aa).

Belongs to the PI3/PI4-kinase family. In terms of tissue distribution, expressed predominantly in liver. Also found in kidney, lung and lymphoid tissue. Down-regulated in BeF3 cells expressing the BCR-ABL oncogene p185.

The protein resides in the membrane. It carries out the reaction a 1,2-diacyl-sn-glycero-3-phospho-(1D-myo-inositol 4-phosphate) + ATP = a 1,2-diacyl-sn-glycero-3-phospho-(1D-myo-inositol-3,4-bisphosphate) + ADP + H(+). It catalyses the reaction a 1,2-diacyl-sn-glycero-3-phospho-(1D-myo-inositol) + ATP = a 1,2-diacyl-sn-glycero-3-phospho-(1D-myo-inositol-3-phosphate) + ADP + H(+). Generates phosphatidylinositol 3-phosphate (PtdIns3P) and phosphatidylinositol 3,4-bisphosphate (PtdIns(3,4)P2) that act as second messengers. May play a role in SDF1A-stimulated chemotaxis. In Mus musculus (Mouse), this protein is Phosphatidylinositol 3-kinase C2 domain-containing subunit gamma (Pik3c2g).